The sequence spans 194 residues: Probable chorismate pyruvate-lyase (194 aa).

The substrate site is built by R77, L115, and E176.

This sequence belongs to the UbiC family.

It is found in the cytoplasm. It carries out the reaction chorismate = 4-hydroxybenzoate + pyruvate. The protein operates within cofactor biosynthesis; ubiquinone biosynthesis. Functionally, removes the pyruvyl group from chorismate, with concomitant aromatization of the ring, to provide 4-hydroxybenzoate (4HB) for the ubiquinone pathway. The polypeptide is Probable chorismate pyruvate-lyase (Cupriavidus pinatubonensis (strain JMP 134 / LMG 1197) (Cupriavidus necator (strain JMP 134))).